Consider the following 80-residue polypeptide: Large ribosomal subunit protein uL24 (80 aa).

The protein belongs to the universal ribosomal protein uL24 family. Part of the 50S ribosomal subunit.

One of two assembly initiator proteins, it binds directly to the 5'-end of the 23S rRNA, where it nucleates assembly of the 50S subunit. Its function is as follows. One of the proteins that surrounds the polypeptide exit tunnel on the outside of the subunit. This Chlorobium phaeobacteroides (strain BS1) protein is Large ribosomal subunit protein uL24.